The sequence spans 288 residues: Fructokinase (288 aa).

Thr-131 contacts ATP. His-154, Cys-169, His-172, and Cys-175 together coordinate Zn(2+). Residues Pro-183 and 231 to 235 each bind ATP; that span reads GVMNQ.

The protein belongs to the ROK (NagC/XylR) family. The cofactor is Mg(2+).

The enzyme catalyses D-fructose + ATP = D-fructose 6-phosphate + ADP + H(+). Its activity is regulated as follows. Inhibition by zinc ions. The protein is Fructokinase (scrK) of Pediococcus pentosaceus.